The sequence spans 168 residues: MRKAIEIKSEVVSEIVEKLQKSSAAVVVDYKGLTVEEVTELRKQMREAGVDYKVYKNTLVRRAAKEVGIEQFNDELLVGTNAIAFGYDDPVAPARILKGFMDSHPKMKLKMGIVEGAFYDESKIVEMANIPSREVLIAKLLGSLKAPVSNFAYLIDAIAKKAEGQEEA.

It belongs to the universal ribosomal protein uL10 family. In terms of assembly, part of the ribosomal stalk of the 50S ribosomal subunit. The N-terminus interacts with L11 and the large rRNA to form the base of the stalk. The C-terminus forms an elongated spine to which L12 dimers bind in a sequential fashion forming a multimeric L10(L12)X complex.

Forms part of the ribosomal stalk, playing a central role in the interaction of the ribosome with GTP-bound translation factors. The chain is Large ribosomal subunit protein uL10 from Clostridioides difficile (strain 630) (Peptoclostridium difficile).